The chain runs to 178 residues: uncharacterized protein (178 aa).

The interval 152-178 (KKLKGAEPKEHQAPNFEPPTEIFPESN) is disordered.

It belongs to the EUO family.

This is an uncharacterized protein from Chlamydia pneumoniae (Chlamydophila pneumoniae).